The chain runs to 177 residues: Cytoglobin-1 (177 aa).

The Globin domain maps to 16-165 (PLTDKERVMI…LCCSIKAVYE (150 aa)). Heme b-binding residues include histidine 79 and histidine 111.

This sequence belongs to the globin family. Monomeric.

Its subcellular location is the cytoplasm. The protein localises to the nucleus. The catalysed reaction is Fe(II)-heme b-[protein] + nitric oxide + O2 = Fe(III)-heme b-[protein] + nitrate. It catalyses the reaction Fe(III)-heme b-[protein] + nitric oxide + H2O = Fe(II)-heme b-[protein] + nitrite + 2 H(+). It carries out the reaction 2 superoxide + 2 H(+) = H2O2 + O2. The enzyme catalyses H2O2 + AH2 = A + 2 H2O. In terms of biological role, probable multifunctional globin with a hexacoordinated heme iron required for the catalysis of various reactions depending on redox condition of the cell as well as oxygen availability. Has a nitric oxide dioxygenase (NOD) activity and is most probably involved in cell-mediated and oxygen-dependent nitric oxide consumption. Under normoxic conditions functions as a nitric oxide dioxygenase (NOD) but under hypoxic conditions the globin may switch its function to that of a nitrite (NO2) reductase (NiR), generating nitric oxide. Could also have peroxidase and superoxide dismutase activities, detoxifying reactive oxygen species and protecting cells against oxidative stress. Also binds dioxygen with low affinity and could function as an oxygen sensor but has probably no function as a respiratory oxygen carrier. The polypeptide is Cytoglobin-1 (Oryzias latipes (Japanese rice fish)).